A 236-amino-acid chain; its full sequence is Ubiquinone biosynthesis O-methyltransferase (236 aa).

Residues Arg39, Gly59, Asp80, and Met124 each contribute to the S-adenosyl-L-methionine site.

It belongs to the methyltransferase superfamily. UbiG/COQ3 family.

It catalyses the reaction a 3-demethylubiquinol + S-adenosyl-L-methionine = a ubiquinol + S-adenosyl-L-homocysteine + H(+). The catalysed reaction is a 3-(all-trans-polyprenyl)benzene-1,2-diol + S-adenosyl-L-methionine = a 2-methoxy-6-(all-trans-polyprenyl)phenol + S-adenosyl-L-homocysteine + H(+). Its pathway is cofactor biosynthesis; ubiquinone biosynthesis. O-methyltransferase that catalyzes the 2 O-methylation steps in the ubiquinone biosynthetic pathway. This Shewanella oneidensis (strain ATCC 700550 / JCM 31522 / CIP 106686 / LMG 19005 / NCIMB 14063 / MR-1) protein is Ubiquinone biosynthesis O-methyltransferase.